The following is a 427-amino-acid chain: Enolase (427 aa).

Residue glutamine 163 participates in (2R)-2-phosphoglycerate binding. Glutamate 205 acts as the Proton donor in catalysis. Mg(2+)-binding residues include aspartate 242, glutamate 285, and aspartate 312. Residues lysine 337, arginine 366, serine 367, and lysine 388 each coordinate (2R)-2-phosphoglycerate. Lysine 337 functions as the Proton acceptor in the catalytic mechanism.

Belongs to the enolase family. Requires Mg(2+) as cofactor.

Its subcellular location is the cytoplasm. The protein localises to the secreted. It is found in the cell surface. It carries out the reaction (2R)-2-phosphoglycerate = phosphoenolpyruvate + H2O. Its pathway is carbohydrate degradation; glycolysis; pyruvate from D-glyceraldehyde 3-phosphate: step 4/5. Its function is as follows. Catalyzes the reversible conversion of 2-phosphoglycerate (2-PG) into phosphoenolpyruvate (PEP). It is essential for the degradation of carbohydrates via glycolysis. The protein is Enolase of Janthinobacterium sp. (strain Marseille) (Minibacterium massiliensis).